The primary structure comprises 144 residues: Putative sugar phosphate isomerase RT0290 (144 aa).

Residue His-12 participates in substrate binding. Catalysis depends on His-101, which acts as the Proton donor. Residue Arg-135 coordinates substrate.

The protein belongs to the LacAB/RpiB family.

This chain is Putative sugar phosphate isomerase RT0290, found in Rickettsia typhi (strain ATCC VR-144 / Wilmington).